Reading from the N-terminus, the 308-residue chain is Eukaryotic translation initiation factor 3 subunit G-B (308 aa).

2 disordered regions span residues 1-35 (MPTG…KQDP) and 176-227 (STAD…DDNA). Positions 185–194 (GAEPEPAQAP) are enriched in low complexity. A compositionally biased stretch (basic and acidic residues) spans 209–227 (GGSRRGESMQPNRRADDNA). The region spanning 227–305 (ATIRVTNLSE…LILNVEWAKP (79 aa)) is the RRM domain.

This sequence belongs to the eIF-3 subunit G family. Component of the eukaryotic translation initiation factor 3 (eIF-3) complex, which is composed of 13 subunits: eif3a, eif3b, eif3c, eif3d, eif3e, eif3f, eif3g, eif3h, eif3i, eif3j, eif3k, eif3l and eif3m.

Its subcellular location is the cytoplasm. Its function is as follows. RNA-binding component of the eukaryotic translation initiation factor 3 (eIF-3) complex, which is involved in protein synthesis of a specialized repertoire of mRNAs and, together with other initiation factors, stimulates binding of mRNA and methionyl-tRNAi to the 40S ribosome. The eIF-3 complex specifically targets and initiates translation of a subset of mRNAs involved in cell proliferation. This subunit can bind 18S rRNA. The polypeptide is Eukaryotic translation initiation factor 3 subunit G-B (eif3g-b) (Xenopus laevis (African clawed frog)).